We begin with the raw amino-acid sequence, 417 residues long: CinA-like protein (417 aa).

It belongs to the CinA family.

The protein is CinA-like protein of Gloeothece citriformis (strain PCC 7424) (Cyanothece sp. (strain PCC 7424)).